Here is a 47-residue protein sequence, read N- to C-terminus: Delta-actitoxin-Cgg1b (47 aa).

Pro-3 carries the hydroxyproline modification. Disulfide bonds link Cys-4-Cys-44, Cys-6-Cys-34, and Cys-27-Cys-45.

It belongs to the sea anemone sodium channel inhibitory toxin family. Type I subfamily.

The protein localises to the secreted. It localises to the nematocyst. Functionally, binds voltage-dependently at site 3 of sodium channels (Nav) and inhibits the inactivation, thereby blocking neuronal transmission. The polypeptide is Delta-actitoxin-Cgg1b (Condylactis gigantea (Giant Caribbean anemone)).